A 179-amino-acid chain; its full sequence is UPF0398 protein SSU05_0416 (179 aa).

This sequence belongs to the UPF0398 family.

In Streptococcus suis (strain 05ZYH33), this protein is UPF0398 protein SSU05_0416.